The following is a 185-amino-acid chain: Adenine phosphoribosyltransferase (185 aa).

It belongs to the purine/pyrimidine phosphoribosyltransferase family. In terms of assembly, homodimer.

It is found in the cytoplasm. It carries out the reaction AMP + diphosphate = 5-phospho-alpha-D-ribose 1-diphosphate + adenine. The protein operates within purine metabolism; AMP biosynthesis via salvage pathway; AMP from adenine: step 1/1. In terms of biological role, catalyzes a salvage reaction resulting in the formation of AMP, that is energically less costly than de novo synthesis. The chain is Adenine phosphoribosyltransferase from Shewanella denitrificans (strain OS217 / ATCC BAA-1090 / DSM 15013).